A 241-amino-acid polypeptide reads, in one-letter code: Nickel import ATP-binding protein LarO (241 aa).

One can recognise an ABC transporter domain in the interval 2–240 (IKLVNICYDY…QPARQAQLMT (239 aa)). 34-41 (GPNGSGKS) contacts ATP.

Belongs to the ABC transporter superfamily. As to quaternary structure, may form an energy-coupling factor (ECF) transporter complex composed of an ATP-binding protein (A component, LarO), a transmembrane protein (T component, LarQ) and a fused possible substrate-capture protein (S component, LarMN) of unknown stoichiometry.

Its subcellular location is the cell membrane. Probable ATP-binding component of the energy-coupling factor (ECF) transporter complex LarMNQO involved in nickel import. LarO is presumably responsible for energy coupling to the transport system. The sequence is that of Nickel import ATP-binding protein LarO from Lactiplantibacillus plantarum (strain ATCC BAA-793 / NCIMB 8826 / WCFS1) (Lactobacillus plantarum).